Reading from the N-terminus, the 327-residue chain is Porphobilinogen deaminase (327 aa).

Cys-250 bears the S-(dipyrrolylmethanemethyl)cysteine mark.

This sequence belongs to the HMBS family. As to quaternary structure, monomer. Dipyrromethane is required as a cofactor.

It catalyses the reaction 4 porphobilinogen + H2O = hydroxymethylbilane + 4 NH4(+). It participates in porphyrin-containing compound metabolism; protoporphyrin-IX biosynthesis; coproporphyrinogen-III from 5-aminolevulinate: step 2/4. Tetrapolymerization of the monopyrrole PBG into the hydroxymethylbilane pre-uroporphyrinogen in several discrete steps. This is Porphobilinogen deaminase from Paraburkholderia phymatum (strain DSM 17167 / CIP 108236 / LMG 21445 / STM815) (Burkholderia phymatum).